The primary structure comprises 314 residues: Leucine-rich repeat-containing protein 59 (314 aa).

Topologically, residues 1-247 (MNKGKIENIK…VPKAKRSICS (247 aa)) are cytoplasmic. 5 LRR repeats span residues 14-35 (DGNE…ELAA), 38-60 (KATF…CSLT), 61-82 (HLIK…IGQL), 84-106 (NLQH…SQLK), and 107-126 (SLKW…AKAA). Residues 146–216 (MKVLQEEAEK…AVAAQEQQKK (71 aa)) are a coiled coil. Disordered stretches follow at residues 165–197 (REQE…KERK) and 212–237 (EQQK…APES). Residues 215–225 (KKKKEEKKKKA) are compositionally biased toward basic residues. Residues 248–268 (LFFSLLLKLVLLLVIGVSSVV) traverse the membrane as a helical segment. The Lumenal segment spans residues 269–314 (AVCQLTELRKEAFCIPLNVHFEETVRWAQGLDVVQQVIQKMSDLRT).

In terms of assembly, interacts with SGO1.

It localises to the microsome membrane. Its subcellular location is the endoplasmic reticulum membrane. The protein resides in the nucleus envelope. Required for nuclear import of FGF1. The chain is Leucine-rich repeat-containing protein 59 (lrrc59) from Danio rerio (Zebrafish).